Reading from the N-terminus, the 154-residue chain is Myoglobin (154 aa).

The Globin domain maps to 2-148 (GLSDGEWQLV…FRNDMAAQYK (147 aa)). Ser4 is modified (phosphoserine). His65 serves as a coordination point for nitrite. O2 is bound at residue His65. Thr68 is modified (phosphothreonine). Residue His94 coordinates heme b.

In terms of assembly, monomer.

The protein localises to the cytoplasm. It is found in the sarcoplasm. It catalyses the reaction Fe(III)-heme b-[protein] + nitric oxide + H2O = Fe(II)-heme b-[protein] + nitrite + 2 H(+). It carries out the reaction H2O2 + AH2 = A + 2 H2O. Monomeric heme protein which primary function is to store oxygen and facilitate its diffusion within muscle tissues. Reversibly binds oxygen through a pentacoordinated heme iron and enables its timely and efficient release as needed during periods of heightened demand. Depending on the oxidative conditions of tissues and cells, and in addition to its ability to bind oxygen, it also has a nitrite reductase activity whereby it regulates the production of bioactive nitric oxide. Under stress conditions, like hypoxia and anoxia, it also protects cells against reactive oxygen species thanks to its pseudoperoxidase activity. The polypeptide is Myoglobin (Rangifer tarandus (Reindeer)).